A 336-amino-acid polypeptide reads, in one-letter code: MKFLDETKVYIRSGDGGAGAVSFRREKFIEFGGPDGGDGGRGGDVWVEAVNGLNTLIDFRYQQHFKAKTGTHGMGRNRTGAKGGDVTLKVPVGTQIFEEDNETLIVDMVAEGQRYRLAAGGNGGFGNAHFKSSTNQAPSWANPGLEGEEKTIWLRLKLIADAGLVGLPNAGKSTFLAACTRARPKIANYPFTTLHPNLGVATIDEKEFIIADIPGLIEGAHEGVGIGDRFLGHVERTRVLLHLVSAQEEDVAKAYKTVKHELEAYGGGLEEKPQIVALSQIDVLDEEELKAKAKALGKACGTPPLLISAVTNKGMTEALRALRSVIAAAKAGEEEA.

In terms of domain architecture, Obg spans 1-159 (MKFLDETKVY…KTIWLRLKLI (159 aa)). Residues 160–327 (ADAGLVGLPN…ALRALRSVIA (168 aa)) form the OBG-type G domain. GTP contacts are provided by residues 166–173 (GLPNAGKS), 191–195 (FTTLH), 212–215 (DIPG), 279–282 (SQID), and 308–310 (SAV). S173 and T193 together coordinate Mg(2+).

It belongs to the TRAFAC class OBG-HflX-like GTPase superfamily. OBG GTPase family. Monomer. It depends on Mg(2+) as a cofactor.

It is found in the cytoplasm. Functionally, an essential GTPase which binds GTP, GDP and possibly (p)ppGpp with moderate affinity, with high nucleotide exchange rates and a fairly low GTP hydrolysis rate. Plays a role in control of the cell cycle, stress response, ribosome biogenesis and in those bacteria that undergo differentiation, in morphogenesis control. In Rhizobium meliloti (strain 1021) (Ensifer meliloti), this protein is GTPase Obg.